A 200-amino-acid polypeptide reads, in one-letter code: Recoverin (200 aa).

Glycine 2 is lipidated: N-myristoyl glycine. EF-hand domains are found at residues 25–60 (EEEL…FPDT), 61–96 (DPKA…TTAG), 97–132 (KTNQ…IFKM), and 147–182 (TPEK…NKEI). Cysteine 39 is subject to Cysteine sulfenic acid (-SOH). Ca(2+)-binding residues include aspartate 74, asparagine 76, aspartate 78, threonine 80, glutamate 85, aspartate 110, aspartate 112, asparagine 114, threonine 116, and glutamate 121. The interaction with GRK1 stretch occupies residues 189–192 (EPQK).

The protein belongs to the recoverin family. As to quaternary structure, homodimer; disulfide-linked. Homodimerization is caused by prolonged intense illumination. May form a complex composed of RHO, GRK1 and RCVRN in a Ca(2+)-dependent manner; RCVRN prevents the interaction between GRK1 and RHO. Interacts (via C-terminus) with GRK1 (via N-terminus); the interaction is Ca(2+)-dependent. Post-translationally, the N-terminal glycine is linked to one of four different types of acyl groups. The most abundant is myristoleate (14:1), but 14:0, 14:2, and 12:0 acyl residues are also present. The Ca(2+) induced exposure of the myristoyl group, known as the calcium-myristoyl switch, promotes RCVRN binding to the photoreceptor cell membranes only when intracellular Ca(2+) concentration is high. In terms of processing, oxidation on Cys-39 occurs in response to prolonged intense illumination and results in the formation of disulfide homodimers, and to a lesser extent disulfide-linked heterodimers. As to expression, retina and pineal gland.

It is found in the photoreceptor inner segment. The protein resides in the cell projection. Its subcellular location is the cilium. It localises to the photoreceptor outer segment. The protein localises to the photoreceptor outer segment membrane. It is found in the perikaryon. Functionally, acts as a calcium sensor and regulates phototransduction of cone and rod photoreceptor cells. Modulates light sensitivity of cone photoreceptor in dark and dim conditions. In response to high Ca(2+) levels induced by low light levels, prolongs RHO/rhodopsin activation in rod photoreceptor cells by binding to and inhibiting GRK1-mediated phosphorylation of RHO/rhodopsin. Plays a role in scotopic vision/enhances vision in dim light by enhancing signal transfer between rod photoreceptors and rod bipolar cells. Improves rod photoreceptor sensitivity in dim light and mediates response of rod photoreceptors to facilitate detection of change and motion in bright light. The chain is Recoverin (RCVRN) from Homo sapiens (Human).